The chain runs to 169 residues: Ribosome maturation factor RimM (169 aa).

Residues 92–167 (PKDTYFICDI…YMKIKVVEGL (76 aa)) enclose the PRC barrel domain.

This sequence belongs to the RimM family. As to quaternary structure, binds ribosomal protein uS19.

The protein resides in the cytoplasm. In terms of biological role, an accessory protein needed during the final step in the assembly of 30S ribosomal subunit, possibly for assembly of the head region. Essential for efficient processing of 16S rRNA. May be needed both before and after RbfA during the maturation of 16S rRNA. It has affinity for free ribosomal 30S subunits but not for 70S ribosomes. The protein is Ribosome maturation factor RimM of Caldicellulosiruptor bescii (strain ATCC BAA-1888 / DSM 6725 / KCTC 15123 / Z-1320) (Anaerocellum thermophilum).